A 397-amino-acid polypeptide reads, in one-letter code: Inositol 3-kinase (397 aa).

ATP is bound by residues Ser-228, 278–281 (GAGD), and Asn-305. The active-site Proton acceptor is Asp-281.

It belongs to the carbohydrate kinase pfkB family. Expressed in roots, leaf blade shoots, leaf sheath shoots and panicles.

The catalysed reaction is myo-inositol + ATP = 1D-myo-inositol 3-phosphate + ADP + H(+). Kinase that phosphorylates myo-inositol to produce multiple myo-inositol monophosphates. Participates in phytic acid biosynthesis in developing seeds. Phytic acid is the primary storage form of phosphorus in cereal grains and other plant seeds. The polypeptide is Inositol 3-kinase (Oryza sativa subsp. japonica (Rice)).